The following is a 160-amino-acid chain: Major pollen allergen Bet v 1-J (160 aa).

Residues Lys-55, Tyr-82, Tyr-84, and Asn-101 each contribute to the brassinolide site. Hydrophobic ligand pocket regions lie at residues 116–118 and 133–141; these read KIN and QIKASKEMG.

It belongs to the BetVI family. Pollen.

The protein localises to the cytoplasm. Functionally, may be a general steroid carrier protein. This Betula pendula (European white birch) protein is Major pollen allergen Bet v 1-J.